A 229-amino-acid chain; its full sequence is Cytidylate kinase (229 aa).

12–20 lines the ATP pocket; it reads GPSGSGKGT.

This sequence belongs to the cytidylate kinase family. Type 1 subfamily.

It localises to the cytoplasm. The catalysed reaction is CMP + ATP = CDP + ADP. It catalyses the reaction dCMP + ATP = dCDP + ADP. The polypeptide is Cytidylate kinase (Pseudomonas syringae pv. tomato (strain ATCC BAA-871 / DC3000)).